Here is a 385-residue protein sequence, read N- to C-terminus: Homoserine O-succinyltransferase (385 aa).

The 310-residue stretch at 51 to 360 folds into the AB hydrolase-1 domain; the sequence is NAVLICHALS…DSPHGHDAFL (310 aa). Serine 157 serves as the catalytic Nucleophile. Arginine 227 is a binding site for substrate. Catalysis depends on residues aspartate 323 and histidine 356. Position 357 (aspartate 357) interacts with substrate.

It belongs to the AB hydrolase superfamily. MetX family. As to quaternary structure, homodimer.

The protein resides in the cytoplasm. The enzyme catalyses L-homoserine + succinyl-CoA = O-succinyl-L-homoserine + CoA. It functions in the pathway amino-acid biosynthesis; L-methionine biosynthesis via de novo pathway; O-succinyl-L-homoserine from L-homoserine: step 1/1. Functionally, transfers a succinyl group from succinyl-CoA to L-homoserine, forming succinyl-L-homoserine. The protein is Homoserine O-succinyltransferase of Hahella chejuensis (strain KCTC 2396).